Reading from the N-terminus, the 407-residue chain is Imidazolonepropionase (407 aa).

Residues His-68 and His-70 each contribute to the Fe(3+) site. Residues His-68 and His-70 each coordinate Zn(2+). Positions 77, 140, and 173 each coordinate 4-imidazolone-5-propanoate. Tyr-140 is an N-formimidoyl-L-glutamate binding site. A Fe(3+)-binding site is contributed by His-238. His-238 contributes to the Zn(2+) binding site. A 4-imidazolone-5-propanoate-binding site is contributed by Gln-241. Asp-313 lines the Fe(3+) pocket. Asp-313 is a binding site for Zn(2+). Asn-315 and Gly-317 together coordinate N-formimidoyl-L-glutamate. 4-imidazolone-5-propanoate is bound at residue Thr-318.

The protein belongs to the metallo-dependent hydrolases superfamily. HutI family. The cofactor is Zn(2+). It depends on Fe(3+) as a cofactor.

It is found in the cytoplasm. The catalysed reaction is 4-imidazolone-5-propanoate + H2O = N-formimidoyl-L-glutamate. Its pathway is amino-acid degradation; L-histidine degradation into L-glutamate; N-formimidoyl-L-glutamate from L-histidine: step 3/3. Catalyzes the hydrolytic cleavage of the carbon-nitrogen bond in imidazolone-5-propanoate to yield N-formimidoyl-L-glutamate. It is the third step in the universal histidine degradation pathway. The chain is Imidazolonepropionase from Burkholderia pseudomallei (strain 668).